The following is a 120-amino-acid chain: Transmembrane protein 010R (120 aa).

The next 2 helical transmembrane spans lie at 40 to 60 (FCGA…ATAT) and 72 to 92 (SIFF…VWFL).

The protein belongs to the IIV-6 010R family.

The protein resides in the membrane. The polypeptide is Transmembrane protein 010R (Invertebrate iridescent virus 6 (IIV-6)).